The chain runs to 621 residues: uncharacterized protein (621 aa).

Disordered regions lie at residues 92-134 and 268-310; these read FRNS…QINQ and KINH…DDEI. Over residues 94–134 the composition is skewed to low complexity; the sequence is NSSNQSSQSNQVNQSNQSSPSSQISPSSQVNKFNQSSQINQ. The span at 296–310 shows a compositional bias: acidic residues; that stretch reads TNDETNDETDNDDEI. The stretch at 354 to 401 forms a coiled coil; it reads ANKIQNKIIQIVETLNAYKNKQSQIAIEAKNKIKHITVSNKEVSENIE.

This is an uncharacterized protein from Acanthamoeba polyphaga mimivirus (APMV).